The primary structure comprises 98 residues: Co-chaperonin GroES (98 aa).

This sequence belongs to the GroES chaperonin family. In terms of assembly, heptamer of 7 subunits arranged in a ring. Interacts with the chaperonin GroEL.

Its subcellular location is the cytoplasm. In terms of biological role, together with the chaperonin GroEL, plays an essential role in assisting protein folding. The GroEL-GroES system forms a nano-cage that allows encapsulation of the non-native substrate proteins and provides a physical environment optimized to promote and accelerate protein folding. GroES binds to the apical surface of the GroEL ring, thereby capping the opening of the GroEL channel. This is Co-chaperonin GroES from Bartonella tribocorum (strain CIP 105476 / IBS 506).